The chain runs to 774 residues: MTAEFDEEVVFENSPLFQYLQDLGHTDFEICPLSKEEERLAENGQGKQDVHTTEKKSIISRTVEFLKSWSPFLSKKKKDEKIHLLEIGFRLESLRTILQQEVLIQEDVELIELLDPGILSAGQTQNQQNDHLPTLWSIATPNIWETSILFVFLSAVAAFQSWSISSSLIWGPSLILFAAFTVLKTLHTWRSARLRIILRKYCTQVEGTVSNSRAFTNLVRKALRLIQETEVISRGFTLVSAACPYGKAGQHASQHLLGLRKAVYRTVRTNFRISRLATLYMLKHYPLNSEIDNVTNYICVVPLKDLGLGLCEEHVSEEDAHNLTDAFSLPALKVLFQLWIGQSSEFFRRLALLLSPENASQGPSTSPEQLPHFIWSDVVQDLPHTQAACMAELKRSYEFYRYFETQHQSGLERTAKRKEVGELNNLHGAVRSLQLHLKALLNEVIVLEDELDKLSSCKEMQAVTPEASLMLEEKLRIIQPHVQASNTCWEEALCQVERMVRKPTTKKDTGKYSCENLNYPVVSNVPPAMRIEDRDPVPEEQILEAYVEEAVTDQEFNSEEIYLFSPEERERQKREREESRRVLQELKAVLGLKASEAERQKWKQLLFSEHAVITPLLPEEPVGHFEPLLSIYPEEPHKNLGFYGEIPSEINGTEHVKDAPIQVDHGNMNHEDEAKICPVSEEVEPASCKEEEDETPCPAPRTVLPPAIKERLARIHQSSDLNFTSGLATQVAARSLTFTFLQEQTFGDEWDDDDDNEDHDHDKERNNDSSQLEG.

2 helical membrane passes run 138-158 (IATP…AVAA) and 163-183 (SISS…FTVL). A coiled-coil region spans residues 430-457 (VRSLQLHLKALLNEVIVLEDELDKLSSC). Positions 746-757 (FGDEWDDDDDNE) are enriched in acidic residues. The disordered stretch occupies residues 746 to 774 (FGDEWDDDDDNEDHDHDKERNNDSSQLEG). The segment covering 758-767 (DHDHDKERNN) has biased composition (basic and acidic residues).

This sequence belongs to the vezatin family. As to quaternary structure, interacts with myosin VIIa and the cadherin-catenins complex.

Its subcellular location is the cell membrane. It localises to the cell junction. The protein resides in the adherens junction. The protein localises to the nucleus. In terms of biological role, plays a pivotal role in the establishment of adherens junctions and their maintenance in adult life. This Xenopus laevis (African clawed frog) protein is Vezatin (vezt).